A 494-amino-acid chain; its full sequence is MTNIGGPVVENASIEHPVISEEEGAAAFARVMAQLKAQVGIEAYTSWFGRLKLAEYSRNLVKLSVPTAFLRSWINNHYGSLLTNLWKQENSAILRVEVIVRGMKRVSKGVVCRTSAAPVVLEGQTASSFVESYTEPSVKDIEAGVFGSPLDSRYTFESFVEGSSNRVALAAARSIAEGHKSALRFNPLFIHASVGLGKTHLLQAVAAAALKRLMPARVIYLTAEYFMWRFATAIRDNAALSFKEQLRDIDLLIIDDMQFLQGKSIQNEFCHLLNMLLDSAKQVVVAADRPPAELESLDLRVRSRLQGGVALEIEVPDYEMRLKMLRQRLKVVQQDDNMVVISDEVLQYIAKTVLGSGRDIEGAFNQLLFRQSFESDLSLERIDELLGHLTRSGESKRIRIEEIQRAVARHYNVSKQDLLSNRRTRTVVKPRQVAMYLAKMLTPRSLPEIGRRFGGRDHTTVLHAVRKIEDLVCDDQTLAKELELLKRLIGEQAA.

A domain I, interacts with DnaA modulators region spans residues 1–103; the sequence is MTNIGGPVVE…LRVEVIVRGM (103 aa). Positions 103–148 are domain II; the sequence is MKRVSKGVVCRTSAAPVVLEGQTASSFVESYTEPSVKDIEAGVFGS. The segment at 149 to 371 is domain III, AAA+ region; it reads PLDSRYTFES…GAFNQLLFRQ (223 aa). ATP is bound by residues G195, G197, K198, and T199. Residues 372-494 are domain IV, binds dsDNA; it reads SFESDLSLER…LKRLIGEQAA (123 aa).

The protein belongs to the DnaA family. Oligomerizes as a right-handed, spiral filament on DNA at oriC.

The protein localises to the cytoplasm. Functionally, plays an essential role in the initiation and regulation of chromosomal replication. ATP-DnaA binds to the origin of replication (oriC) to initiate formation of the DNA replication initiation complex once per cell cycle. Binds the DnaA box (a 9 base pair repeat at the origin) and separates the double-stranded (ds)DNA. Forms a right-handed helical filament on oriC DNA; dsDNA binds to the exterior of the filament while single-stranded (ss)DNA is stabiized in the filament's interior. The ATP-DnaA-oriC complex binds and stabilizes one strand of the AT-rich DNA unwinding element (DUE), permitting loading of DNA polymerase. After initiation quickly degrades to an ADP-DnaA complex that is not apt for DNA replication. Binds acidic phospholipids. The sequence is that of Chromosomal replication initiator protein DnaA from Bartonella quintana (strain Toulouse) (Rochalimaea quintana).